The chain runs to 757 residues: Voltage-gated potassium channel KCNC3 (757 aa).

An important for normal N-type inactivation region spans residues 1–78 (MLSSVCVSSF…CPGLPAAAMG (78 aa)). Positions 1 to 87 (MLSSVCVSSF…GRHGGGGGDS (87 aa)) are disordered. The Cytoplasmic portion of the chain corresponds to 1 to 290 (MLSSVCVSSF…EDPYSSRAAR (290 aa)). Over residues 21 to 40 (PAPPPQPPESPPPPPLPPQQ) the composition is skewed to pro residues. Low complexity predominate over residues 41 to 52 (QQPAQPGPAASP). Positions 157, 163, 184, and 185 each coordinate Zn(2+). The span at 210–219 (AANAANAAGA) shows a compositional bias: low complexity. Residues 210–232 (AANAANAAGAHDGGLDDEAGAGG) form a disordered region. Residues 291–309 (YVAFASLFFILISITTFCL) form a helical membrane-spanning segment. Asn320 and Asn336 each carry an N-linked (GlcNAc...) asparagine glycan. Residues 351-370 (VEGVCVVWFTFEFLMRITFC) form a helical membrane-spanning segment. Residues 371–379 (PDKVEFLKS) are Cytoplasmic-facing. Residues 380 to 398 (SLNIIDCVAILPFYLEVGL) traverse the membrane as a helical segment. A helical; Voltage-sensor membrane pass occupies residues 412-434 (FLRVVRFVRILRIFKLTRHFVGL). The Cytoplasmic portion of the chain corresponds to 435–447 (RVLGHTLRASTNE). Residues 448–469 (FLLLIIFLALGVLIFATMIYYA) traverse the membrane as a helical segment. An N-linked (GlcNAc...) asparagine glycan is attached at Asn483. The K(+) site is built by Thr503, Leu504, Gly505, and Tyr506. The Selectivity filter signature appears at 503–508 (TLGYGD). Residues 518-539 (LVGALCALAGVLTIAMPVPVIV) traverse the membrane as a helical segment. Residues 540-757 (NNFGMYYSLA…NANAAAWISP (218 aa)) are Cytoplasmic-facing. Residues 556–613 (PKKKNKHIPRPPQPGSPNYCKPDPPPPPPPHPHHGSGGISPPPPITPPSMGVTVAGAY) form a disordered region. The residue at position 625 (Arg625) is an Omega-N-methylarginine. A disordered region spans residues 682-746 (QPAMSPEDKS…KPGPPSFLPD (65 aa)). A phosphoserine mark is found at Ser686 and Ser691. Positions 728 to 743 (PPLPPQDWRKPGPPSF) are enriched in pro residues.

It belongs to the potassium channel family. C (Shaw) (TC 1.A.1.2) subfamily. Kv3.3/KCNC3 sub-subfamily. In terms of assembly, homotetramer. Heterotetramer with KCNC1. Interacts (via C-terminus) with HAX1; this interaction modulates channel gating. Identified in a complex with ACTR3, a subunit of the Arp2/3 complex; this interaction is indirect and depends on the presence of HAX1. Post-translationally, N-glycosylated.

The protein localises to the cell membrane. It is found in the presynaptic cell membrane. The protein resides in the perikaryon. Its subcellular location is the cell projection. It localises to the axon. The protein localises to the dendrite. It is found in the dendritic spine membrane. The protein resides in the cytoplasm. Its subcellular location is the cell cortex. It localises to the cytoskeleton. The enzyme catalyses K(+)(in) = K(+)(out). Voltage-gated potassium channel that plays an important role in the rapid repolarization of fast-firing brain neurons. The channel opens in response to the voltage difference across the membrane, forming a potassium-selective channel through which potassium ions pass in accordance with their electrochemical gradient. The channel displays rapid activation and inactivation kinetics. It plays a role in the regulation of the frequency, shape and duration of action potentials in Purkinje cells. Required for normal survival of cerebellar neurons, probably via its role in regulating the duration and frequency of action potentials that in turn regulate the activity of voltage-gated Ca(2+) channels and cellular Ca(2+) homeostasis. Required for normal motor function. Plays a role in the reorganization of the cortical actin cytoskeleton and the formation of actin veil structures in neuronal growth cones via its interaction with HAX1 and the Arp2/3 complex. The chain is Voltage-gated potassium channel KCNC3 (KCNC3) from Homo sapiens (Human).